The chain runs to 614 residues: Vitamin B12 transporter BtuB (614 aa).

The N-terminal stretch at 1-20 (MIKKASLLTACSVTAFSAWA) is a signal peptide. The TonB box signature appears at 26–33 (DTLVVTAN). The TBDR plug domain occupies 38–152 (PRSTVLAPTT…IGGVVNIITT (115 aa)). Cyanocob(III)alamin contacts are provided by residues L83, S85, N92, and 110–111 (VS). The TBDR beta-barrel domain maps to 155-614 (HPGTEISAGW…EYTLSGSYTF (460 aa)). Beta stranded transmembrane passes span 158–165 (TEISAGWG), 169–178 (YQNYDVSTQQ), and 184–195 (TRVTLLGDYAHT). Positions 199, 211, 213, and 215 each coordinate Ca(2+). The next 2 beta stranded transmembrane spans lie at 217 to 227 (FLSKTLYGALE) and 232 to 248 (DVWS…NRTN). Ca(2+) is bound by residues Y249 and D250. A251 is a cyanocob(III)alamin binding site. A Ca(2+)-binding site is contributed by D261. A run of 14 beta stranded transmembrane segments spans residues 263–277 (RKLY…LRYN), 279–296 (ELIK…KDYN), 309–325 (TLDE…NNII), 328–337 (HGNIGAGVDW), 353–369 (YDQR…QQVG), 371–381 (FTFEGAGRSDD), 385–400 (FGRH…WEFI), 403–417 (YRFI…KAPN), 434–443 (KSKQWEGAFE), 449–458 (VNWRISGYRN), 473–490 (YYNE…TANF), 494–509 (PLTH…ARNA), 517–529 (RRAK…QLDW), and 535–550 (DWGI…YDKD). A cyanocob(III)alamin-binding site is contributed by T309. Position 517 (R517) interacts with cyanocob(III)alamin. Y551 provides a ligand contact to cyanocob(III)alamin. Transmembrane regions (beta stranded) follow at residues 558–572 (TVKM…LAVA), 585–596 (IANLFDKDYETV), and 602–614 (AGRE…SYTF). A TonB C-terminal box motif is present at residues 597-614 (YGYQTAGREYTLSGSYTF).

This sequence belongs to the TonB-dependent receptor family. BtuB (TC 1.B.14.3.1) subfamily.

It is found in the cell outer membrane. Involved in the active translocation of vitamin B12 (cyanocobalamin) across the outer membrane to the periplasmic space. It derives its energy for transport by interacting with the trans-periplasmic membrane protein TonB. The sequence is that of Vitamin B12 transporter BtuB from Escherichia coli O6:K15:H31 (strain 536 / UPEC).